We begin with the raw amino-acid sequence, 137 residues long: Methylglyoxal synthase (137 aa).

Positions 1–137 (MKIALIAHDK…NLVRGGEPNV (137 aa)) constitute an MGS-like domain. Residues His8, Lys12, 34–37 (TGTT), and 54–55 (SG) contribute to the substrate site. The active-site Proton donor/acceptor is the Asp60. His87 contacts substrate.

The protein belongs to the methylglyoxal synthase family.

The catalysed reaction is dihydroxyacetone phosphate = methylglyoxal + phosphate. In terms of biological role, catalyzes the formation of methylglyoxal from dihydroxyacetone phosphate. The chain is Methylglyoxal synthase from Bacillus velezensis (strain DSM 23117 / BGSC 10A6 / LMG 26770 / FZB42) (Bacillus amyloliquefaciens subsp. plantarum).